Consider the following 276-residue polypeptide: 2-dehydro-3-deoxyphosphooctonate aldolase (276 aa).

The protein belongs to the KdsA family.

It is found in the cytoplasm. The enzyme catalyses D-arabinose 5-phosphate + phosphoenolpyruvate + H2O = 3-deoxy-alpha-D-manno-2-octulosonate-8-phosphate + phosphate. It functions in the pathway carbohydrate biosynthesis; 3-deoxy-D-manno-octulosonate biosynthesis; 3-deoxy-D-manno-octulosonate from D-ribulose 5-phosphate: step 2/3. The protein is 2-dehydro-3-deoxyphosphooctonate aldolase of Stenotrophomonas maltophilia (strain K279a).